Consider the following 100-residue polypeptide: Noncompact myelin-associated protein (100 aa).

The Extracellular segment spans residues 1–28 (MTTATTLGDAVFSLNMTRGEDALYKSSG). Residues 29–49 (AIVAAIVVVVIIIVTLVLILL) form a helical membrane-spanning segment. Topologically, residues 50–100 (KMYNRRMRTRRELEPKSPKPPVPPALDPSSNGSQQPATVTFDPANVHVETR) are cytoplasmic. Positions 58-100 (TRRELEPKSPKPPVPPALDPSSNGSQQPATVTFDPANVHVETR) are disordered.

Glycosylated. Found in the peripheral nervous system (PNS) Schwann cells (at protein level). Expressed in the PNS, primarily limited to Schwann cells.

Its subcellular location is the cell membrane. Plays a role in myelin formation. The polypeptide is Noncompact myelin-associated protein (Ncmap) (Mus musculus (Mouse)).